Consider the following 860-residue polypeptide: Putative mixed-linked glucan synthase 1 (860 aa).

2 helical membrane-spanning segments follow: residues 63 to 83 and 93 to 113; these read ILHP…AFFA and GAWL…SWVL. Residue aspartate 183 is part of the active site. Residues 235–263 are a coiled coil; that stretch reads ELMSDHRRVRREYEEFKVRIDSLSSTIRQ. Residues aspartate 381 and aspartate 383 each coordinate substrate. Residue aspartate 549 is part of the active site. 6 consecutive transmembrane segments (helical) span residues 625 to 645, 655 to 675, 693 to 713, 747 to 767, 781 to 801, and 812 to 832; these read TYPI…MWLI, FGEY…IGMF, FYMI…ALKL, LLIP…VAVG, LAVL…PFAL, and AVLF…YVAF.

Belongs to the glycosyltransferase 2 family. Plant cellulose synthase-like F subfamily.

Its subcellular location is the golgi apparatus membrane. Its function is as follows. May catalyze both beta-1,3 and beta-1,4 glycosidic linkage on beta-D-glucan. Essential for (1,3;1,4)-beta-D-glucans synthesis in grasses and cereals (Poaceae). The mixed-linked glucans (which are not present in walls of dicotyledons or most other monocotyledonous plants) are particularly important constituents of the walls of the starchy endosperm and aleurone cells of cereal grains such as oats, wheat, rice and barley. They can account for up to 70% by weight of the wall. The sequence is that of Putative mixed-linked glucan synthase 1 (CSFL1) from Oryza sativa subsp. japonica (Rice).